Reading from the N-terminus, the 994-residue chain is MSQFTSSYDPTSFEARLYAEWEAAGHFKPSGVGQPYTILLPPPNVTGTLHMGHAFQQTLMDALVRYHRMCGDDTLWQVGTDHAGIATEMVVSRNMALEGRGETRDSLGREGFINKVWEWKQQSGDTIERQMRRLGVSADWSRSTFTMDAQPSAAVTEAFVRWYEEGLIYRGQRLVNWDPVLKTAISDLEVENVQEEGMLWSIRYPLSDGVTYEHIEHDAAGNETLRETRDSLIVATTRPETLLGDTAVMVHPEDRRYTALIGKTVTLPLTGRQIEVISDTYVEPTFGTGVVKVTPAHDFNDYQVGLRHRLPMIQVLDDAACIVSKTSIQSGIASGATSDTTDTPSDSDASNASNQHDTLIMPAHLAGLDRYEARKQILADLDAQGLLVAATPHTLQVPRGDRTGQVIEPYLTAQWFVRMETLAARGLELVERGAVRFVPPNWINTYRHWMENIQDWCISRQLWWGHRIPAWFDTQGCVYVGRSEAEVRAKHALGPEVTLTQDNDVLETWFSSQLWPFSTLGWPDPMAMAERGFERYLPSSVLVTGFDIIFFWVARMIMATDHFTGNVPFHDVYITGLIRDAQGQKMSKSKGNVLDPLDIIDGITLDDLVAKRTTGLMQPKLAEKIAKATRKEFPDGIAPHGADALRFTIAALATHGRDIKFDLGRAEGYKNFCNKLWNATRFVLMNTAGDTAHSPAQHQAGQDGQDVPRTPQPRTDAEQWILSRLAAVTAEAHAQFAAYRFDLLAQALYEFAWNEFCDWFVELAKPALNGDDTQAAASTRHTLLYVLETLLRLLHPLIPFITEELWCQVAPRLGIQATTLMLRPYPQPQQLETTAFANAAADVEWLKIMVSALRRIRSTLNVPPSRRISLLLQGGQEVDRRRITHFAIALHFLLKLEHIDWLSATTAAPPSATAIVGSLKLLVPLEGLIDVDAERARLDKEIKRVESEIDKSNGKLSNAVFVQNAPTAVVEQERSRLREWTTQLNGLRERRTTL.

The 'HIGH' region motif lies at 43 to 53; the sequence is PNVTGTLHMGH. Residues 332–356 are disordered; sequence IASGATSDTTDTPSDSDASNASNQH. Positions 333–353 are enriched in low complexity; that stretch reads ASGATSDTTDTPSDSDASNAS. The 'KMSKS' region signature appears at 585–589; sequence KMSKS. Lys588 provides a ligand contact to ATP. The interval 691–713 is disordered; that stretch reads TAHSPAQHQAGQDGQDVPRTPQP. A coiled-coil region spans residues 928–994; sequence LIDVDAERAR…NGLRERRTTL (67 aa).

Belongs to the class-I aminoacyl-tRNA synthetase family. ValS type 1 subfamily. Monomer.

The protein resides in the cytoplasm. It catalyses the reaction tRNA(Val) + L-valine + ATP = L-valyl-tRNA(Val) + AMP + diphosphate. In terms of biological role, catalyzes the attachment of valine to tRNA(Val). As ValRS can inadvertently accommodate and process structurally similar amino acids such as threonine, to avoid such errors, it has a 'posttransfer' editing activity that hydrolyzes mischarged Thr-tRNA(Val) in a tRNA-dependent manner. The protein is Valine--tRNA ligase of Xylella fastidiosa (strain M23).